A 291-amino-acid polypeptide reads, in one-letter code: ATP synthase gamma chain (291 aa).

It belongs to the ATPase gamma chain family. As to quaternary structure, F-type ATPases have 2 components, CF(1) - the catalytic core - and CF(0) - the membrane proton channel. CF(1) has five subunits: alpha(3), beta(3), gamma(1), delta(1), epsilon(1). CF(0) has three main subunits: a, b and c.

The protein localises to the cell inner membrane. Functionally, produces ATP from ADP in the presence of a proton gradient across the membrane. The gamma chain is believed to be important in regulating ATPase activity and the flow of protons through the CF(0) complex. The sequence is that of ATP synthase gamma chain from Burkholderia pseudomallei (strain 1106a).